Reading from the N-terminus, the 827-residue chain is Villin-1 (827 aa).

Residues 1–126 (MTKLNAQVKG…IRKGGVASGM (126 aa)) form a necessary for homodimerization region. The core stretch occupies residues 1–734 (MTKLNAQVKG…YEDLKAELGN (734 aa)). A Gelsolin-like 1 repeat occupies 28–107 (QMVPVSSSTY…EVQGNESEAF (80 aa)). LPA/PIP2-binding site stretches follow at residues 112-119 (KQGIVIRK) and 138-146 (RLLHVKGKR). Gelsolin-like repeat units lie at residues 148–216 (VVAG…GEDE) and 269–342 (EVAT…SAVF). Serine 366 bears the Phosphoserine mark. Gelsolin-like repeat units follow at residues 409 to 489 (DLVP…PHLM), 528 to 595 (TKAF…ANFW), and 634 to 707 (TEIP…PPTF). The residue at position 735 (serine 735) is a Phosphoserine. The 67-residue stretch at 761 to 827 (SGPLPIFPLE…QNLKKEKGLF (67 aa)) folds into the HP domain. Positions 816 to 824 (KQQNLKKEK) are LPA/PIP2-binding site 3.

The protein belongs to the villin/gelsolin family. As to quaternary structure, monomer. Homodimer; homodimerization is necessary for actin-bundling. Associates with F-actin; phosphorylation at tyrosine residues decreases the association with F-actin. Interacts (phosphorylated at C-terminus tyrosine phosphorylation sites) with PLCG1 (via the SH2 domains). Interacts (phosphorylated form) with PLCG1; the interaction is enhanced by hepatocyte growth factor (HGF). Phosphorylated on tyrosine residues by SRC. The unphosphorylated form increases the initial rate of actin-nucleating activity, whereas the tyrosine-phosphorylated form inhibits actin-nucleating activity, enhances actin-bundling activity and enhances actin-severing activity by reducing high Ca(2+) requirements. The tyrosine-phosphorylated form does not regulate actin-capping activity. Tyrosine phosphorylation is essential for cell migration: tyrosine phosphorylation sites in the N-terminus half regulate actin reorganization and cell morphology, whereas tyrosine phosphorylation sites in the C-terminus half regulate cell migration. Tyrosine phosphorylation is induced by epidermal growth factor (EGF) and stimulates cell migration.

It localises to the cytoplasm. It is found in the cytoskeleton. The protein resides in the cell projection. The protein localises to the lamellipodium. Its subcellular location is the ruffle. It localises to the microvillus. It is found in the filopodium tip. The protein resides in the filopodium. In terms of biological role, epithelial cell-specific Ca(2+)-regulated actin-modifying protein that modulates the reorganization of microvillar actin filaments. Plays a role in the actin nucleation, actin filament bundle assembly, actin filament capping and severing. Binds phosphatidylinositol 4,5-bisphosphate (PIP2) and lysophosphatidic acid (LPA); binds LPA with higher affinity than PIP2. Binding to LPA increases its phosphorylation by SRC and inhibits all actin-modifying activities. Binding to PIP2 inhibits actin-capping and -severing activities but enhances actin-bundling activity. Regulates the intestinal epithelial cell morphology, cell invasion, cell migration and apoptosis. Protects against apoptosis induced by dextran sodium sulfate (DSS) in the gastrointestinal epithelium. Appears to regulate cell death by maintaining mitochondrial integrity. Enhances hepatocyte growth factor (HGF)-induced epithelial cell motility, chemotaxis and wound repair. The polypeptide is Villin-1 (VIL1) (Sus scrofa (Pig)).